Consider the following 78-residue polypeptide: Hainantoxin-XX.2 (78 aa).

The N-terminal stretch at 1–23 is a signal peptide; it reads MKSATLLALSYLLIALYFLICEA. Residues 24–47 constitute a propeptide that is removed on maturation; sequence EHSRYEEHEILEENMGDVVNLEQR. 3 disulfides stabilise this stretch: Cys-49–Cys-62, Cys-56–Cys-66, and Cys-61–Cys-77.

Belongs to the hainantoxin family. 20 subfamily. As to expression, expressed by the venom gland.

Its subcellular location is the secreted. Its function is as follows. Moderately inhibits Kv1.1/KCNA1 and Kv1.2/KCNA2 and weakly inhibits Kv1.3/KCNA3, and Kv2.1/KCNB1 voltage-gated potassium channels. This is Hainantoxin-XX.2 from Cyriopagopus hainanus (Chinese bird spider).